Consider the following 291-residue polypeptide: ATP phosphoribosyltransferase (291 aa).

The protein belongs to the ATP phosphoribosyltransferase family. Long subfamily. Mg(2+) serves as cofactor.

The protein resides in the cytoplasm. It catalyses the reaction 1-(5-phospho-beta-D-ribosyl)-ATP + diphosphate = 5-phospho-alpha-D-ribose 1-diphosphate + ATP. Its pathway is amino-acid biosynthesis; L-histidine biosynthesis; L-histidine from 5-phospho-alpha-D-ribose 1-diphosphate: step 1/9. Its activity is regulated as follows. Feedback inhibited by histidine. Its function is as follows. Catalyzes the condensation of ATP and 5-phosphoribose 1-diphosphate to form N'-(5'-phosphoribosyl)-ATP (PR-ATP). Has a crucial role in the pathway because the rate of histidine biosynthesis seems to be controlled primarily by regulation of HisG enzymatic activity. This is ATP phosphoribosyltransferase from Trichlorobacter lovleyi (strain ATCC BAA-1151 / DSM 17278 / SZ) (Geobacter lovleyi).